The chain runs to 219 residues: MKDTDIKRLLYTNLLCVFSIFLSIFIPSFFVDNFSVLEAHLTWLCICSASVTTVNLLSYLVVKPNVSSKRSSLSHKVTRALKCCVCFLMSCFLLHIIFVLYGAPLIELVLETFLFAVVLSTFTTVPCLCLLGPNLKAWLRVFSRNGVTSIWENSLQITTISSFTGAWLGAFPIPLDWERPWQVWPISCTLGATFGYVAGLVISPLWIYWNRKQLTYKNN.

The next 6 membrane-spanning stretches (helical) occupy residues 11 to 31 (YTNLLCVFSIFLSIFIPSFFV), 42 to 62 (TWLCICSASVTTVNLLSYLVV), 86 to 106 (CFLMSCFLLHIIFVLYGAPLI), 113 to 133 (FLFAVVLSTFTTVPCLCLLGP), 155 to 175 (LQITTISSFTGAWLGAFPIPL), and 189 to 209 (TLGATFGYVAGLVISPLWIYW).

Belongs to the PIGF family. As to quaternary structure, part of the ethanolamine phosphate transferase 3 complex composed by PIGO and PIGF. Part of the ethanolamine phosphate transferase 2 complex with PIGG. PIGF is required to stabilize PIGG and PIGO.

The protein resides in the endoplasmic reticulum membrane. It functions in the pathway glycolipid biosynthesis; glycosylphosphatidylinositol-anchor biosynthesis. Stabilizing subunit of the ethanolamine phosphate transferase 3 and ethanolamine phosphate transferase 2 complexes that sequentially transfer an ethanolamine phosphate (EtNP) from a phosphatidylethanolamine (PE) to the 6-OH position of the third alpha-1,2-linked mannose and the second alpha-1,6-linked mannose of the alpha-D-Man-(1-&gt;2)-alpha-D-Man-(1-&gt;6)-2-PEtn-alpha-D-Man-(1-&gt;4)-alpha-D-GlcN-(1-&gt;6)-(1-radyl,2-acyl-sn-glycero-3-phospho)-2-acyl-inositol (also termed H6) intermediate to generate a 6-PEtn-alpha-D-Man-(1-&gt;2)-6-PEtn-alpha-D-Man-(1-&gt;6)-2-PEtn-alpha-D-Man-(1-&gt;4)-alpha-D-GlcN-(1-&gt;6)-(1-radyl,2-acyl-sn-glycero-3-phospho)-2-acyl-inositol (also termed H8). Participates in the tenth and eleventh steps of the glycosylphosphatidylinositol-anchor biosynthesis, in association with PIGO and PIGG, respectively. This is GPI ethanolamine phosphate transferase, stabilizing subunit from Mus musculus (Mouse).